The sequence spans 481 residues: Probable glycine dehydrogenase (decarboxylating) subunit 2 (481 aa).

Residue K269 is modified to N6-(pyridoxal phosphate)lysine.

It belongs to the GcvP family. C-terminal subunit subfamily. As to quaternary structure, the glycine cleavage system is composed of four proteins: P, T, L and H. In this organism, the P 'protein' is a heterodimer of two subunits. The cofactor is pyridoxal 5'-phosphate.

It catalyses the reaction N(6)-[(R)-lipoyl]-L-lysyl-[glycine-cleavage complex H protein] + glycine + H(+) = N(6)-[(R)-S(8)-aminomethyldihydrolipoyl]-L-lysyl-[glycine-cleavage complex H protein] + CO2. In terms of biological role, the glycine cleavage system catalyzes the degradation of glycine. The P protein binds the alpha-amino group of glycine through its pyridoxal phosphate cofactor; CO(2) is released and the remaining methylamine moiety is then transferred to the lipoamide cofactor of the H protein. The protein is Probable glycine dehydrogenase (decarboxylating) subunit 2 of Chlorobium chlorochromatii (strain CaD3).